We begin with the raw amino-acid sequence, 640 residues long: Probable threonine--tRNA ligase, cytoplasmic (640 aa).

Residues 1–63 form the TGS domain; it reads MYEVKLKVEL…LKDCKLELMT (63 aa).

Belongs to the class-II aminoacyl-tRNA synthetase family.

The protein localises to the cytoplasm. It carries out the reaction tRNA(Thr) + L-threonine + ATP = L-threonyl-tRNA(Thr) + AMP + diphosphate + H(+). In Encephalitozoon cuniculi (strain GB-M1) (Microsporidian parasite), this protein is Probable threonine--tRNA ligase, cytoplasmic.